We begin with the raw amino-acid sequence, 258 residues long: MCFFALEEWAAANRDYENTPAPYWHVKSVPDGFTAISGILWSISYILMAKKAFKDRSYAMPLHCLCLNITWEAVYGFVYGPGLLNQVVFAQWMIVDVVLFYAILRSAPYAWKQSPLVAQHLAGIIVVGCVICLWLHLAIAATFIPSIGRQVVFMTAWPMQVLINFSSIAQLLSRGNTLGHSWGIWWTRMLGTIAAACCFFWRIHYWPERFGYAWTPYGKFLLLGSIGSDMVYAAVYVYVQRIEKQLDSLVNTKAQKAR.

The next 7 membrane-spanning stretches (helical) occupy residues 29–49 (VPDGFTAISGILWSISYILMA), 58–78 (YAMPLHCLCLNITWEAVYGFV), 83–103 (LLNQVVFAQWMIVDVVLFYAI), 124–144 (IIVVGCVICLWLHLAIAATFI), 151–171 (VVFMTAWPMQVLINFSSIAQL), 181–201 (SWGIWWTRMLGTIAAACCFFW), and 220–240 (FLLLGSIGSDMVYAAVYVYVQ).

This sequence belongs to the paxB family.

It localises to the membrane. The protein operates within secondary metabolite biosynthesis; terpenoid biosynthesis. Terpene cyclase; part of the gene cluster that mediates the biosynthesis of macrophorins, isoprenoid epoxycyclohexenones containing cyclized drimane moieties. The first step of the pathway is the synthesis of 6-methylsalicylic acid (6-MSA) by the polyketide synthase macA. 6-MSA is then converted to m-cresol by the decarboxylase macB. The cytochrome P450 monooxygenase macC then catalyzes the oxidation of m-cresol to toluquinol. Epoxidation of toluquinol is then performed by the short chain dehydrogenase macD, with the help of macE, and a further prenylation by macG leads to 7-deacetoxyyanuthone A. The next step is the hydroxylation of C-22 of 7-deacetoxyyanuthone A by the cytochrome P450 monooxygenase macH to yield 22-deacetylyanuthone A. O-Mevalon transferase macI then attaches mevalon to the hydroxyl group of 22-deacetylyanuthone A to produce yanuthone E. The terpene cyclase macJ catalyzes the cyclization of 22-deacetylyanuthone A to macrophorin A. MacJ is also able to catalyze cyclization of yanuthone E and 7-deacetoxyyanuthone A to their corresponding macrophorins. The macJ products can be further modified by macH and macJ, as well as by the FAD-dependent monooxygenase macF, to produce additional macrophorins, including 4'-oxomacrophorin A, 4'-oxomacrophorin D and 4'-oxomacrophorin E. The protein is Terpene cyclase macJ of Penicillium terrestre.